Reading from the N-terminus, the 417-residue chain is NADH-quinone oxidoreductase subunit D (417 aa).

Belongs to the complex I 49 kDa subunit family. NDH-1 is composed of 14 different subunits. Subunits NuoB, C, D, E, F, and G constitute the peripheral sector of the complex.

The protein localises to the cell inner membrane. The catalysed reaction is a quinone + NADH + 5 H(+)(in) = a quinol + NAD(+) + 4 H(+)(out). Its function is as follows. NDH-1 shuttles electrons from NADH, via FMN and iron-sulfur (Fe-S) centers, to quinones in the respiratory chain. The immediate electron acceptor for the enzyme in this species is believed to be ubiquinone. Couples the redox reaction to proton translocation (for every two electrons transferred, four hydrogen ions are translocated across the cytoplasmic membrane), and thus conserves the redox energy in a proton gradient. This Burkholderia vietnamiensis (strain G4 / LMG 22486) (Burkholderia cepacia (strain R1808)) protein is NADH-quinone oxidoreductase subunit D.